Here is a 131-residue protein sequence, read N- to C-terminus: Photosystem II reaction center Psb28 protein (131 aa).

Positions 110–131 (NGLGYSQNQKSDQTDAATEEQA) are disordered. The segment covering 112–125 (LGYSQNQKSDQTDA) has biased composition (polar residues).

Belongs to the Psb28 family. Part of the photosystem II complex.

It is found in the cellular thylakoid membrane. The chain is Photosystem II reaction center Psb28 protein from Synechococcus sp. (strain CC9902).